The sequence spans 66 residues: Large ribosomal subunit protein uL29 (66 aa).

This sequence belongs to the universal ribosomal protein uL29 family. In terms of assembly, part of the 50S ribosomal subunit.

The protein is Large ribosomal subunit protein uL29 of Thermococcus kodakarensis (strain ATCC BAA-918 / JCM 12380 / KOD1) (Pyrococcus kodakaraensis (strain KOD1)).